The chain runs to 82 residues: Splicing factor U2AF 35 kDa subunit (82 aa).

N-acetylalanine is present on alanine 2. The C3H1-type zinc finger occupies 12 to 40 (EKDKVNCSFYFKIGACRHGDRCSRLHNKP). Residue lysine 39 is modified to N6-methyllysine. The 18-residue stretch at 65-82 (SHCHVSDVEVQEHYDNFF) folds into the RRM domain.

It belongs to the splicing factor SR family. Identified in the spliceosome C complex. Heterodimer with U2AF2. Interacts (via RS domain) with PHF5A (via N-terminus). Interacts with ZRANB2. Interacts with SDE2. Interacts with SF3B1.

It localises to the nucleus. The protein resides in the nucleus speckle. Plays a critical role in both constitutive and enhancer-dependent splicing by mediating protein-protein interactions and protein-RNA interactions required for accurate 3'-splice site selection. Recruits U2 snRNP to the branch point. Directly mediates interactions between U2AF2 and proteins bound to the enhancers and thus may function as a bridge between U2AF2 and the enhancer complex to recruit it to the adjacent intron. The protein is Splicing factor U2AF 35 kDa subunit (U2AF1) of Sus scrofa (Pig).